A 71-amino-acid polypeptide reads, in one-letter code: UPF0352 protein Spea_1764 (71 aa).

The protein belongs to the UPF0352 family.

The sequence is that of UPF0352 protein Spea_1764 from Shewanella pealeana (strain ATCC 700345 / ANG-SQ1).